A 1373-amino-acid chain; its full sequence is Inactive tyrosine-protein kinase PRAG1 (1373 aa).

Disordered regions lie at residues 31–50 (AGHPKARANSLPAGTRLPAR) and 197–235 (TSSCPKGPRPCTSPQPLRESLPSEDDSDQRCSPSGDSEG). At Y238 the chain carries Phosphotyrosine. 2 stretches are compositionally biased toward basic and acidic residues: residues 250–263 (DAVHSTEGSGRRGG) and 272–284 (QGPRTRPTEEEKQ). A disordered region spans residues 250 to 338 (DAVHSTEGSG…SGASSPFAPH (89 aa)). A compositionally biased stretch (low complexity) spans 317-333 (SSSDGLSCGSSRSGASS). Phosphotyrosine occurs at positions 343 and 391. Disordered regions lie at residues 376 to 448 (QPAS…NPAP) and 468 to 794 (IYLS…LPQK). Positions 419-438 (SQGQVWTGDTWIQKTPPSWS) are enriched in polar residues. Over residues 506-522 (RESHPHNVTENTAKEKP) the composition is skewed to basic and acidic residues. A compositionally biased stretch (low complexity) spans 526-538 (PKLSKSSPGGSPV). Composition is skewed to polar residues over residues 568–578 (NLTSSCHTNGV) and 655–670 (TSGQNSKTNSGMSKSA). 2 positions are modified to phosphoserine: S671 and S720. 2 stretches are compositionally biased toward polar residues: residues 711 to 721 (VSQSSAESLSP) and 729 to 740 (SFTTGSTDSLAS). 2 positions are modified to phosphoserine: S757 and S802. The segment at 804–823 (PDGFFWTQGSPKPRTASPKL) is disordered. Residues 911–954 (STQLQLHSLLSSISSKEGTYAKLGGLYTQSLARLVTKCEDLFMG) form a required for homodimerization region. The Protein kinase domain occupies 945–1296 (VTKCEDLFMG…EAKRVLQCLL (352 aa)). Over residues 1041–1050 (LASPDTSSKD) the composition is skewed to polar residues. Disordered stretches follow at residues 1041-1062 (LASPDTSSKDTAPAVSPQPPAQ) and 1138-1171 (QSSPGPSATPTVPTTTSRCPSAAPAATTACQGGP). The span at 1139–1167 (SSPGPSATPTVPTTTSRCPSAAPAATTAC) shows a compositional bias: low complexity. The interval 1298 to 1373 (GPRRELVEQP…LQSLKLLQLL (76 aa)) is required for homodimerization.

It belongs to the protein kinase superfamily. In terms of assembly, homodimer. Dimerization leads to the catalytic activation of CSK. Interacts (via C-terminus) with RND2. Interacts with CSK (via SH2 domain) in a Tyr-391 phosphorylation-dependent manner; this interaction potentiates kinase activity of CSK. Interacts with NOTCH1 intracellular domain (N1ICD). Forms a complex with PRAG1, N1ICD and MAML1, in a MAML1-dependent manner. In terms of processing, phosphorylated by CSK on Tyr-238, Tyr-343, and Tyr-391; Tyr-391 is a primary site of phosphorylation.

It is found in the cytoplasm. Its subcellular location is the nucleus. It localises to the cell junction. The protein localises to the focal adhesion. Its function is as follows. Catalytically inactive protein kinase that acts as a scaffold protein. Functions as an effector of the small GTPase RND2, which stimulates RhoA activity and inhibits NGF-induced neurite outgrowth. Promotes Src family kinase (SFK) signaling by regulating the subcellular localization of CSK, a negative regulator of these kinases, leading to the regulation of cell morphology and motility by a CSK-dependent mechanism. Acts as a critical coactivator of Notch signaling. This is Inactive tyrosine-protein kinase PRAG1 from Mus musculus (Mouse).